The primary structure comprises 312 residues: Acetyl-coenzyme A carboxylase carboxyl transferase subunit alpha (312 aa).

A CoA carboxyltransferase C-terminal domain is found at 36-286; sequence NLEKEISKTY…ADYVKKSLNE (251 aa).

This sequence belongs to the AccA family. In terms of assembly, acetyl-CoA carboxylase is a heterohexamer composed of biotin carboxyl carrier protein (AccB), biotin carboxylase (AccC) and two subunits each of ACCase subunit alpha (AccA) and ACCase subunit beta (AccD).

The protein localises to the cytoplasm. The enzyme catalyses N(6)-carboxybiotinyl-L-lysyl-[protein] + acetyl-CoA = N(6)-biotinyl-L-lysyl-[protein] + malonyl-CoA. It participates in lipid metabolism; malonyl-CoA biosynthesis; malonyl-CoA from acetyl-CoA: step 1/1. Its function is as follows. Component of the acetyl coenzyme A carboxylase (ACC) complex. First, biotin carboxylase catalyzes the carboxylation of biotin on its carrier protein (BCCP) and then the CO(2) group is transferred by the carboxyltransferase to acetyl-CoA to form malonyl-CoA. The polypeptide is Acetyl-coenzyme A carboxylase carboxyl transferase subunit alpha (Campylobacter jejuni (strain RM1221)).